The primary structure comprises 476 residues: MGIKFLEVIKPFCAVLPEIQKPERKIQFREKVLWTAITLFIFLVCCQIPLFGIMSSDSADPFYWMRVILASNRGTLMELGISPIVTSGLIMQLLAGAKIIEVGDTPKDRALFNGAQKLFGMIITIGQSIVYVMTGMYGDPSEMGAGICLLIIIQLFVAGLIVLLLDELLQKGYGLGSGISLFIATNICETIVWKAFSPTTVNTGRGTEFEGAIIALFHLLATRTDKVRALREAFYRQNLPNLLNLIATVFVFAVVIYFQGFRVDLPIKSARYRGQYNTYPIKLFYTSNIPIILQSALVSNLYVISQMLSTRFSGNFLVNLLGTWSDTSTGGPARAYPVGGLCYFLSPPESFGSVLDDPIHAAIYIVFMLGSCAFFSKTWIEVSGSSAKDVAKQLKEQQMVMGGHRETSMVHELNRYIPTAAAFGGLCIGGLSVMADFLGAIGSGTGILLAVTIIYQYFEIFVKEQSEMGSMGALLF.

Over 2–33 (GIKFLEVIKPFCAVLPEIQKPERKIQFREKVL) the chain is Cytoplasmic. The helical transmembrane segment at 34–53 (WTAITLFIFLVCCQIPLFGI) threads the bilayer. Residues 54 to 76 (MSSDSADPFYWMRVILASNRGTL) lie on the Lumenal side of the membrane. The chain crosses the membrane as a helical span at residues 77 to 96 (MELGISPIVTSGLIMQLLAG). Residues 97–117 (AKIIEVGDTPKDRALFNGAQK) are Cytoplasmic-facing. A helical membrane pass occupies residues 118 to 138 (LFGMIITIGQSIVYVMTGMYG). Residues 139-144 (DPSEMG) lie on the Lumenal side of the membrane. A helical transmembrane segment spans residues 145-165 (AGICLLIIIQLFVAGLIVLLL). At 166-172 (DELLQKG) the chain is on the cytoplasmic side. Residues 173 to 193 (YGLGSGISLFIATNICETIVW) traverse the membrane as a helical segment. The Lumenal segment spans residues 194–240 (KAFSPTTVNTGRGTEFEGAIIALFHLLATRTDKVRALREAFYRQNLP). Residues 241–261 (NLLNLIATVFVFAVVIYFQGF) form a helical membrane-spanning segment. Residues 262 to 288 (RVDLPIKSARYRGQYNTYPIKLFYTSN) lie on the Cytoplasmic side of the membrane. Residues 289–309 (IPIILQSALVSNLYVISQMLS) form a helical membrane-spanning segment. At 310–354 (TRFSGNFLVNLLGTWSDTSTGGPARAYPVGGLCYFLSPPESFGSV) the chain is on the lumenal side. The helical transmembrane segment at 355–375 (LDDPIHAAIYIVFMLGSCAFF) threads the bilayer. The Cytoplasmic segment spans residues 376–420 (SKTWIEVSGSSAKDVAKQLKEQQMVMGGHRETSMVHELNRYIPTA). Residues 421–441 (AAFGGLCIGGLSVMADFLGAI) traverse the membrane as a helical segment. Residues 442-445 (GSGT) are Lumenal-facing. A helical membrane pass occupies residues 446–462 (GILLAVTIIYQYFEIFV). At 463–476 (KEQSEMGSMGALLF) the chain is on the cytoplasmic side.

Belongs to the SecY/SEC61-alpha family. The SEC61 channel-forming translocon complex consists of channel-forming core components SEC61A1, SEC61B and SEC61G and different auxiliary components such as SEC62 and SEC63. The SEC61 channel associates with the multi-pass translocon (MPT) complex.

The protein localises to the endoplasmic reticulum membrane. Component of SEC61 channel-forming translocon complex that mediates transport of signal peptide-containing precursor polypeptides across the endoplasmic reticulum (ER). Forms a ribosome receptor and a gated pore in the ER membrane, both functions required for cotranslational translocation of nascent polypeptides. May cooperate with auxiliary protein SEC62, SEC63 and HSPA5/BiP to enable post-translational transport of small presecretory proteins. The SEC61 channel is also involved in ER membrane insertion of transmembrane proteins: it mediates membrane insertion of the first few transmembrane segments of proteins, while insertion of subsequent transmembrane regions of multi-pass membrane proteins is mediated by the multi-pass translocon (MPT) complex. The chain is Protein transport protein Sec61 subunit alpha isoform A (sec61aa) from Oncorhynchus mykiss (Rainbow trout).